A 1150-amino-acid polypeptide reads, in one-letter code: Apomucin (1150 aa).

2 stretches are compositionally biased toward low complexity: residues E1–S36 and S46–G79. 5 tandem repeats follow at residues E1–R44, I45–R125, I126–R206, I207–R287, and I288–R368. The tract at residues E1 to R368 is 6 X 81 AA tandem repeats. 2 disordered regions span residues E1 to I730 and A776 to L925. Residues S46, S50, S51, S57, S58, and S61 are each glycosylated (O-linked (GalNAc...) serine; partial). T66 carries O-linked (GalNAc...) threonine; partial glycosylation. O-linked (GalNAc...) serine; partial glycosylation occurs at S67. T73 and T74 each carry an O-linked (GalNAc...) threonine; partial glycan. 2 O-linked (GalNAc...) serine; partial glycosylation sites follow: S76 and S77. O-linked (GalNAc...) threonine; partial glycosylation is found at T81 and T83. Residues P86–S117 are compositionally biased toward low complexity. O-linked (GalNAc...) serine; partial glycosylation is found at S87 and S91. O-linked (GalNAc...) threonine; partial glycans are attached at residues T93, T94, and T96. 3 O-linked (GalNAc...) serine; partial glycosylation sites follow: S98, S101, and S103. Residue T104 is glycosylated (O-linked (GalNAc...) threonine; partial). 4 O-linked (GalNAc...) serine; partial glycosylation sites follow: S106, S107, S108, and S110. Residue T114 is glycosylated (O-linked (GalNAc...) threonine; partial). O-linked (GalNAc...) serine; partial glycosylation occurs at S117. A glycan (O-linked (GalNAc...) threonine; partial) is linked at T123. A glycan (O-linked (GalNAc...) serine; partial) is linked at S124. 7 stretches are compositionally biased toward low complexity: residues S127–G160, P167–S198, S208–G241, P248–S279, S289–G322, P329–S360, and S370–S396. One copy of the 6; truncated repeat lies at I369 to S391. N-linked (GlcNAc...) asparagine glycosylation is present at N418. A compositionally biased stretch (polar residues) spans S442–T459. A compositionally biased stretch (low complexity) spans S473–T506. Composition is skewed to polar residues over residues V507–T517 and E537–N547. N547 is a glycosylation site (N-linked (GlcNAc...) asparagine). Over residues A548–T558 the composition is skewed to low complexity. Residues T564–V586 are compositionally biased toward polar residues. Residues A590–V625 are compositionally biased toward low complexity. Composition is skewed to polar residues over residues A626–T635 and G643–E661. The segment covering G671–T682 has biased composition (gly residues). 3 stretches are compositionally biased toward polar residues: residues Q688–T697, L706–G729, and S779–T788. Positions V790–G833 are enriched in low complexity. Residues E875–G908 show a composition bias toward polar residues. Residues N917, N985, N1002, and N1068 are each glycosylated (N-linked (GlcNAc...) asparagine). The region spanning P929–E995 is the VWFC domain. Cystine bridges form between C1062/C1109, C1076/C1123, C1085/C1139, and C1089/C1141. Residues C1062–Q1146 enclose the CTCK domain.

In terms of assembly, intermolecular disulfide bonds could help maintain a multimeric mucin structure. In terms of processing, extensively O-glycosylated on most but not all Ser and Thr residues of the repeat units. Highest glycosylation appears to occur on Ser residues which have Gly at positions at +2 or -2 from the glycosylation site or, where Gly is the penultimate residue. The presence of proline (usually at position +3 or -3) appears to also enhance glycosylation. In terms of tissue distribution, submaxillary mucosae.

It is found in the secreted. Functionally, apomucin is part of mucin, the major glycoprotein synthesized and secreted by mucous cells of the submaxillary gland. Its highly viscous aqueous solutions serve to lubricate the oral cavity and to protect it from the external environment. The sequence is that of Apomucin from Sus scrofa (Pig).